The primary structure comprises 61 residues: Small ribosomal subunit protein uS14 (61 aa).

Zn(2+) is bound by residues Cys-24, Cys-27, Cys-40, and Cys-43.

This sequence belongs to the universal ribosomal protein uS14 family. Zinc-binding uS14 subfamily. Part of the 30S ribosomal subunit. Contacts proteins S3 and S10. Requires Zn(2+) as cofactor.

In terms of biological role, binds 16S rRNA, required for the assembly of 30S particles and may also be responsible for determining the conformation of the 16S rRNA at the A site. This Endomicrobium trichonymphae protein is Small ribosomal subunit protein uS14.